The following is a 403-amino-acid chain: Eukaryotic translation initiation factor 3 subunit H (403 aa).

Residues 57–206 (VRLDGLALTK…VKAYRLSPSF (150 aa)) form the MPN domain. The segment at 99–122 (ALPNPGRSNSERDEEEDRSSRNAT) is disordered.

This sequence belongs to the eIF-3 subunit H family. As to quaternary structure, component of the eukaryotic translation initiation factor 3 (eIF-3) complex.

The protein resides in the cytoplasm. Component of the eukaryotic translation initiation factor 3 (eIF-3) complex, which is involved in protein synthesis of a specialized repertoire of mRNAs and, together with other initiation factors, stimulates binding of mRNA and methionyl-tRNAi to the 40S ribosome. The eIF-3 complex specifically targets and initiates translation of a subset of mRNAs involved in cell proliferation. In Mycosarcoma maydis (Corn smut fungus), this protein is Eukaryotic translation initiation factor 3 subunit H.